A 90-amino-acid chain; its full sequence is Acylphosphatase (90 aa).

The region spanning 3–90 (AVHMNASGQV…FEGQDFIVKY (88 aa)) is the Acylphosphatase-like domain. Residues Arg-18 and Asn-36 contribute to the active site.

The protein belongs to the acylphosphatase family.

It carries out the reaction an acyl phosphate + H2O = a carboxylate + phosphate + H(+). The sequence is that of Acylphosphatase (acyP) from Pediococcus pentosaceus (strain ATCC 25745 / CCUG 21536 / LMG 10740 / 183-1w).